An 89-amino-acid polypeptide reads, in one-letter code: Defensin-like protein 250 (89 aa).

The first 23 residues, Met1 to Ala23, serve as a signal peptide directing secretion. Intrachain disulfides connect Cys29–Cys86, Cys40–Cys69, Cys48–Cys79, and Cys67–Cys81.

Belongs to the DEFL family.

It localises to the secreted. The protein is Defensin-like protein 250 (SCRL8) of Arabidopsis thaliana (Mouse-ear cress).